Here is a 414-residue protein sequence, read N- to C-terminus: Patatin-like protein 1 (414 aa).

In terms of domain architecture, PNPLA spans 20-224 (LAIDGGGIRG…AANNPTMVAM (205 aa)). The GXGXXG signature appears at 24-29 (GGGIRG). Residues 62-66 (GTSTG) carry the GXSXG motif. Serine 64 acts as the Nucleophile in catalysis. Aspartate 211 serves as the catalytic Proton acceptor. Residues 211-213 (DGG) carry the DGA/G motif.

The protein belongs to the patatin family.

Its function is as follows. Possesses non-specific lipolytic acyl hydrolase (LAH) activity. Hydrolyzes phospholipids as well as galactolipids. May play a role in disease resistance. This Oryza sativa subsp. indica (Rice) protein is Patatin-like protein 1 (PLP1).